The following is a 187-amino-acid chain: Elongation factor P (187 aa).

Belongs to the elongation factor P family.

It localises to the cytoplasm. It participates in protein biosynthesis; polypeptide chain elongation. In terms of biological role, involved in peptide bond synthesis. Stimulates efficient translation and peptide-bond synthesis on native or reconstituted 70S ribosomes in vitro. Probably functions indirectly by altering the affinity of the ribosome for aminoacyl-tRNA, thus increasing their reactivity as acceptors for peptidyl transferase. The protein is Elongation factor P of Chelativorans sp. (strain BNC1).